A 119-amino-acid chain; its full sequence is MNTIDFLEFEQMKKNVAPFKVGDTVKVQVKIVEGDKQRIQAYQGVVISRQNGGIRESFTVRKISNGIGVERIFPLHSPILETVEIVTRGHVRRAKLYYLRKLRGKAARIREKKYVPIAK.

It belongs to the bacterial ribosomal protein bL19 family.

In terms of biological role, this protein is located at the 30S-50S ribosomal subunit interface and may play a role in the structure and function of the aminoacyl-tRNA binding site. This Pelobacter propionicus (strain DSM 2379 / NBRC 103807 / OttBd1) protein is Large ribosomal subunit protein bL19.